Consider the following 212-residue polypeptide: Thymidylate kinase (212 aa).

10-17 is a binding site for ATP; it reads GLEGAGKT.

It belongs to the thymidylate kinase family.

The enzyme catalyses dTMP + ATP = dTDP + ADP. Its function is as follows. Phosphorylation of dTMP to form dTDP in both de novo and salvage pathways of dTTP synthesis. The polypeptide is Thymidylate kinase (Cronobacter sakazakii (strain ATCC BAA-894) (Enterobacter sakazakii)).